The following is an 86-amino-acid chain: Omega-theraphotoxin-Hhn1c (86 aa).

An N-terminal signal peptide occupies residues 1-21 (MKSIVFVALFGLALLAVVCSA). Residues 22-50 (SEDAHKELLKEVVRAMVVDKTDAVQAEER) constitute a propeptide that is removed on maturation. 3 disulfides stabilise this stretch: C52–C66, C59–C71, and C65–C78.

This sequence belongs to the neurotoxin 10 (Hwtx-1) family. 17 (Hntx-9) subfamily. In terms of tissue distribution, expressed by the venom gland.

It localises to the secreted. In terms of biological role, ion channel inhibitor. The sequence is that of Omega-theraphotoxin-Hhn1c from Cyriopagopus hainanus (Chinese bird spider).